The chain runs to 104 residues: uncharacterized protein (104 aa).

2 helical membrane passes run 53–73 (IWGIISFIISASIFCYINWDF) and 74–94 (ILNLLFYSIIAFIVMSILILI).

The protein resides in the cell membrane. This is an uncharacterized protein from Methanocaldococcus jannaschii (strain ATCC 43067 / DSM 2661 / JAL-1 / JCM 10045 / NBRC 100440) (Methanococcus jannaschii).